Reading from the N-terminus, the 296-residue chain is Nucleotide-binding protein M6_Spy0559 (296 aa).

Position 13 to 20 (13 to 20 (GMSGAGKT)) interacts with ATP. 63 to 66 (DMRS) is a GTP binding site.

It belongs to the RapZ-like family.

Displays ATPase and GTPase activities. The sequence is that of Nucleotide-binding protein M6_Spy0559 from Streptococcus pyogenes serotype M6 (strain ATCC BAA-946 / MGAS10394).